Reading from the N-terminus, the 549-residue chain is MAGGAVIENLSNRKLFVIFAGLLVIQIMFFLIGAWYAPSPSSYMEFEMITCRDETKGLSGEWIHRDNCQQISELSEYTPSSFDLREIVFIAKMPHTRDGIELEYSPWFQFLLGVLHVDVEYSEHFKYVAHAPLELEVRMGYRDKESKKNEWKELVTSNVTRILECTIAEDEKKAGGTYDCDMLDLFELGSSSYPFYLINIRIPINQQACQFDNKSANCQIGKLTGLRLIEIHQNGGFTLVWLWTKTFMTPVVAICLWWYYNRINQLARNPLLLERAILLLGLSLVILDFPIEWISLTYRIPFLLLISDLRQGLFYTVLFSFWLIFAGEHLIDDNTRNNLKSYRFNLSFIITASLGLLIYDLIERGIQLYDPFYSVWSSPTGSQIAYFAIFISAISTVAYFIFLFFKIARVWSTIKSKRSAQIYQTSENRRLKVEGVIYRFKFLMLFTLLCSAFTIAAYFMKQYGEAQLHGDEARDGFLTGSTSAFFTGAFGMCNIYVLLLLAMYAPSHKHYRGASQLIDENDDDEIMEDPSNQHTESNAMTTFLKPSTD.

The signal sequence occupies residues 1-34 (MAGGAVIENLSNRKLFVIFAGLLVIQIMFFLIGA). Residues 36–236 (YAPSPSSYME…RLIEIHQNGG (201 aa)) are Lumenal-facing. Residues 237–257 (FTLVWLWTKTFMTPVVAICLW) traverse the membrane as a helical segment. Residues 258 to 275 (WYYNRINQLARNPLLLER) are Cytoplasmic-facing. A helical transmembrane segment spans residues 276-296 (AILLLGLSLVILDFPIEWISL). Over 297–310 (TYRIPFLLLISDLR) the chain is Lumenal. The chain crosses the membrane as a helical span at residues 311-331 (QGLFYTVLFSFWLIFAGEHLI). At 332-345 (DDNTRNNLKSYRFN) the chain is on the cytoplasmic side. The chain crosses the membrane as a helical span at residues 346–366 (LSFIITASLGLLIYDLIERGI). At 367-383 (QLYDPFYSVWSSPTGSQ) the chain is on the lumenal side. Residues 384-404 (IAYFAIFISAISTVAYFIFLF) form a helical membrane-spanning segment. Over 405-439 (FKIARVWSTIKSKRSAQIYQTSENRRLKVEGVIYR) the chain is Cytoplasmic. Residues 440–460 (FKFLMLFTLLCSAFTIAAYFM) form a helical membrane-spanning segment. At 461-483 (KQYGEAQLHGDEARDGFLTGSTS) the chain is on the lumenal side. A helical membrane pass occupies residues 484–504 (AFFTGAFGMCNIYVLLLLAMY). The Cytoplasmic segment spans residues 505–549 (APSHKHYRGASQLIDENDDDEIMEDPSNQHTESNAMTTFLKPSTD). Residues 524–549 (DEIMEDPSNQHTESNAMTTFLKPSTD) form a disordered region. Polar residues predominate over residues 530 to 549 (PSNQHTESNAMTTFLKPSTD).

This sequence belongs to the wntless family. Expressed in the tail hypodermis, stomatointestinal muscle, the mesoblast cell M and its descendants, CAN neurons, the developing vulva, the pharynx and the pharyngeal intestinal valve.

It localises to the cell membrane. Its subcellular location is the early endosome membrane. The protein localises to the golgi apparatus membrane. It is found in the basal cell membrane. The protein resides in the late endosome membrane. In terms of biological role, probable sorting receptor which regulates endocytosis and secretion of the wnt ligand egl-20. Recycling of mig-14 from the plasma membrane to the Golgi apparatus by the retromer complex is essential for its function. Its endosomal trafficking is regulated by its association with sorting nexin snx-3 on early endosomes and the mtm-6/mtm-9 myotubularin complex. Required in embryonic development for endoderm specification and the correct positioning and orientation of the mitotic spindles and division planes in blastomere cells. Functions during vulval development, playing a role in vulval precursor cell fate specification. During development, specifically regulates the migration of HSN neurons, the left Q neuroblast (QL) and its descendants and the distal tip cells of the gonads. Positioning of Q neuroblasts may be both dependent and independent of hox gene mab-5. Involved in establishing ALM and PLM neuronal cell polarity. In Caenorhabditis elegans, this protein is Protein wntless homolog.